The primary structure comprises 263 residues: S-acyl fatty acid synthase thioesterase, medium chain (263 aa).

Methionine 1 bears the N-acetylmethionine mark. Catalysis depends on residues serine 101 and histidine 237. Residues 262 to 263 form an important for interaction with FASN region; the sequence is LT.

The protein belongs to the thioesterase family. As to quaternary structure, interacts (via C-terminus) with FASN.

The protein localises to the cytoplasm. It is found in the cytosol. The catalysed reaction is (9Z)-octadecenoyl-[ACP] + H2O = (9Z)-octadecenoate + holo-[ACP] + H(+). It carries out the reaction decanoyl-CoA + H2O = decanoate + CoA + H(+). The enzyme catalyses dodecanoyl-CoA + H2O = dodecanoate + CoA + H(+). It catalyses the reaction tetradecanoyl-CoA + H2O = tetradecanoate + CoA + H(+). The catalysed reaction is hexadecanoyl-CoA + H2O = hexadecanoate + CoA + H(+). Its function is as follows. Contributes to the release of free fatty acids from fatty acid synthase (FASN). Has broad substrate specificity, giving rise to a range of free fatty acids with chain lengths between 10 and 16 carbon atoms (C10 - C16). The chain is S-acyl fatty acid synthase thioesterase, medium chain from Rattus norvegicus (Rat).